A 139-amino-acid polypeptide reads, in one-letter code: Small ribosomal subunit protein uS19 (139 aa).

The protein belongs to the universal ribosomal protein uS19 family.

Functionally, protein S19 forms a complex with S13 that binds strongly to the 16S ribosomal RNA. This is Small ribosomal subunit protein uS19 from Ignicoccus hospitalis (strain KIN4/I / DSM 18386 / JCM 14125).